Here is a 220-residue protein sequence, read N- to C-terminus: MGRRPARCYRQIKNKPCPKSRYCRGVPDPKIRIYDVGMKRKGVDEFPYCVHLVSWERENVSSEALEAARIVCNKYMTKSAGKDAFHLRVRVHPFHVLRINKMLSCAGADRLQTGMRGAFGKPQGTCARVDIGQVLLSVRCKDNNAAHASEALRRAKFKFPARQKIIESRKWGFTKFSRADYLKYKSEGRIVPDGVNAKLLANHGRLEKRAPGKAFLDAVA.

This sequence belongs to the universal ribosomal protein uL16 family. As to quaternary structure, component of the small ribosomal subunit. Mature ribosomes consist of a small (40S) and a large (60S) subunit. The 40S subunit contains about 33 different proteins and 1 molecule of RNA (18S). The 60S subunit contains about 49 different proteins and 3 molecules of RNA (25S, 5.8S and 5S).

The sequence is that of Large ribosomal subunit protein uL16 (RPL10) from Zea mays (Maize).